We begin with the raw amino-acid sequence, 100 residues long: Urease subunit gamma (100 aa).

Belongs to the urease gamma subunit family. As to quaternary structure, heterotrimer of UreA (gamma), UreB (beta) and UreC (alpha) subunits. Three heterotrimers associate to form the active enzyme.

Its subcellular location is the cytoplasm. The enzyme catalyses urea + 2 H2O + H(+) = hydrogencarbonate + 2 NH4(+). The protein operates within nitrogen metabolism; urea degradation; CO(2) and NH(3) from urea (urease route): step 1/1. In Streptomyces avermitilis (strain ATCC 31267 / DSM 46492 / JCM 5070 / NBRC 14893 / NCIMB 12804 / NRRL 8165 / MA-4680), this protein is Urease subunit gamma.